Consider the following 386-residue polypeptide: ATP phosphoribosyltransferase regulatory subunit (386 aa).

It belongs to the class-II aminoacyl-tRNA synthetase family. HisZ subfamily. As to quaternary structure, heteromultimer composed of HisG and HisZ subunits.

It is found in the cytoplasm. The protein operates within amino-acid biosynthesis; L-histidine biosynthesis; L-histidine from 5-phospho-alpha-D-ribose 1-diphosphate: step 1/9. Its function is as follows. Required for the first step of histidine biosynthesis. May allow the feedback regulation of ATP phosphoribosyltransferase activity by histidine. The chain is ATP phosphoribosyltransferase regulatory subunit from Ralstonia nicotianae (strain ATCC BAA-1114 / GMI1000) (Ralstonia solanacearum).